Consider the following 460-residue polypeptide: Serine protease HTRA1 (460 aa).

The signal sequence occupies residues 1–18 (MAMLWLAVLLTCGAPAAL). In terms of domain architecture, IGFBP N-terminal spans 22 to 92 (SGVGCPSRCD…NGGVARCQCP (71 aa)). Disulfide bonds link Cys26-Cys51, Cys30-Cys53, Cys35-Cys54, Cys42-Cys57, Cys65-Cys80, Cys74-Cys89, Cys91-Cys109, and Cys98-Cys134. In terms of domain architecture, Kazal-like spans 74–136 (CASGLRCVKN…IPIQRGDCQQ (63 aa)). The segment at 183-343 (GSGFIVSEDG…IPSDKIRKFL (161 aa)) is serine protease. Residues His199, Asp229, and Ser307 each act as charge relay system in the active site. Residues 344–447 (AESHNRQSTG…LHLVIRRGNE (104 aa)) form the PDZ domain.

Belongs to the peptidase S1C family. As to quaternary structure, forms homotrimers. In the presence of substrate, may form higher-order multimers in a PDZ-independent manner.

The protein localises to the cell membrane. Its subcellular location is the secreted. It localises to the cytoplasm. The protein resides in the cytosol. Serine protease with a variety of targets, including extracellular matrix proteins and proteoglycans such as biglycan, syndecan-4 and glypican-4. Through cleavage of proteoglycans, may release soluble FGF-glycosaminoglycan complexes that promote the range and intensity of FGF signals in the extracellular space. Consequently, facilitates inductive processes in the developing embryo, such as posteriorization, mesoderm induction and neuronal differentiation. Regulates the availability of insulin-like growth factors (IGFs) by cleaving IGF-binding proteins. Inhibits signaling mediated by TGF-beta family members. Consequently, may regulate many physiological processes. Intracellularly, degrades TSC2, leading to the activation of TSC2 downstream targets. This is Serine protease HTRA1 (htra1) from Xenopus tropicalis (Western clawed frog).